Reading from the N-terminus, the 972-residue chain is Mast/stem cell growth factor receptor Kit (972 aa).

The first 25 residues, 1–25, serve as a signal peptide directing secretion; it reads MRGARGAWDFLCVLLLLLRVQTGSS. Residues 26–520 lie on the Extracellular side of the membrane; sequence QPSVSPEEAS…QIQPHTLFTP (495 aa). Ig-like C2-type domains are found at residues 27–112, 121–205, 212–308, 317–410, and 413–507; these read PSVS…VFVR, DRSL…LKVR, PVVS…LEVV, PMIN…VYVN, and PEIL…FNFA. A disulfide bridge connects residues cysteine 58 and cysteine 97. N-linked (GlcNAc...) asparagine glycans are attached at residues asparagine 130 and asparagine 145. 3 cysteine pairs are disulfide-bonded: cysteine 136–cysteine 186, cysteine 151–cysteine 183, and cysteine 233–cysteine 290. Residues asparagine 283, asparagine 300, asparagine 320, asparagine 352, asparagine 367, asparagine 463, and asparagine 486 are each glycosylated (N-linked (GlcNAc...) asparagine). Residues cysteine 428 and cysteine 491 are joined by a disulfide bond. A helical membrane pass occupies residues 521-541; the sequence is LLIGFVVVAGMMCIIVMILTY. Residues 542-972 lie on the Cytoplasmic side of the membrane; the sequence is KYLQKPMYEV…SQPLLVRDDV (431 aa). Phosphotyrosine is present on residues tyrosine 543 and tyrosine 549. Tyrosine 564 provides a ligand contact to Mg(2+). Phosphotyrosine; by autocatalysis is present on residues tyrosine 564 and tyrosine 566. The important for interaction with phosphotyrosine-binding proteins stretch occupies residues 564 to 566; it reads YVY. Positions 585-933 constitute a Protein kinase domain; that stretch reads LSFGKTLGAG…ISESTNHIYS (349 aa). ATP contacts are provided by residues 592 to 599, lysine 619, and 667 to 673; these read GAGAFGKV and EYCCYGD. Phosphotyrosine; by autocatalysis is present on residues tyrosine 699 and tyrosine 717. A Phosphotyrosine modification is found at tyrosine 726. Phosphoserine; by PKC/PRKCA is present on residues serine 737 and serine 742. The Proton acceptor role is filled by aspartate 788. Arginine 792 lines the ATP pocket. Mg(2+) contacts are provided by asparagine 793 and aspartate 806. Phosphoserine is present on serine 817. Phosphotyrosine; by autocatalysis is present on tyrosine 819. Residue serine 887 is modified to Phosphoserine. Tyrosine 896 is modified (phosphotyrosine). Tyrosine 932 carries the post-translational modification Phosphotyrosine; by autocatalysis. Phosphoserine is present on serine 955.

The protein belongs to the protein kinase superfamily. Tyr protein kinase family. CSF-1/PDGF receptor subfamily. As to quaternary structure, monomer in the absence of bound KITLG/SCF. Homodimer in the presence of bound KITLG/SCF, forming a heterotetramer with two KITLG/SCF molecules. Interacts (via phosphorylated tyrosine residues) with the adapter proteins GRB2 and GRB7 (via SH2 domain), and SH2B2/APS. Interacts (via C-terminus) with MPDZ (via the tenth PDZ domain). Interacts (via phosphorylated tyrosine residues) with PIK3R1 and PIK3CD. Interacts (via phosphorylated tyrosine) with CRK (isoform Crk-II), FYN, SHC1 and MATK/CHK (via SH2 domain). Interacts with LYN and FES/FPS. Interacts (via phosphorylated tyrosine residues) with the protein phosphatases PTPN6/SHP-1 (via SH2 domain), PTPN11/SHP-2 (via SH2 domain) and PTPRU. Interacts with PLCG1. Interacts with DOK1 and TEC. Interacts with IL1RAP (independent of stimulation with KITLG/SCF). A mast cell-specific KITLG/SCF-induced interleukin-33 signaling complex contains IL1RL1, IL1RAP, KIT and MYD88. Ubiquitinated by SOCS6. KIT is rapidly ubiquitinated after autophosphorylation induced by KITLG/SCF binding, leading to internalization and degradation. Post-translationally, autophosphorylated on tyrosine residues. KITLG/SCF binding promotes autophosphorylation. Phosphorylated tyrosine residues are important for interaction with specific binding partners.

The protein resides in the cell membrane. The catalysed reaction is L-tyrosyl-[protein] + ATP = O-phospho-L-tyrosyl-[protein] + ADP + H(+). Present in an inactive conformation in the absence of bound ligand. KITLG/SCF binding leads to dimerization and activation by autophosphorylation on tyrosine residues. Activity is down-regulated by PRKCA-mediated phosphorylation on serine residues. Its function is as follows. Tyrosine-protein kinase that acts as a cell-surface receptor for the cytokine KITLG/SCF and plays an essential role in the regulation of cell survival and proliferation, hematopoiesis, stem cell maintenance, gametogenesis, mast cell development, migration and function, and in melanogenesis. In response to KITLG/SCF binding, KIT can activate several signaling pathways. Phosphorylates PIK3R1, PLCG1, SH2B2/APS and CBL. Activates the AKT1 signaling pathway by phosphorylation of PIK3R1, the regulatory subunit of phosphatidylinositol 3-kinase. Activated KIT also transmits signals via GRB2 and activation of RAS, RAF1 and the MAP kinases MAPK1/ERK2 and/or MAPK3/ERK1. Promotes activation of STAT family members STAT1, STAT3, STAT5A and STAT5B. Activation of PLCG1 leads to the production of the cellular signaling molecules diacylglycerol and inositol 1,4,5-trisphosphate. KIT signaling is modulated by protein phosphatases, and by rapid internalization and degradation of the receptor. Activated KIT promotes phosphorylation of the protein phosphatases PTPN6/SHP-1 and PTPRU, and of the transcription factors STAT1, STAT3, STAT5A and STAT5B. Promotes phosphorylation of PIK3R1, CBL, CRK (isoform Crk-II), LYN, MAPK1/ERK2 and/or MAPK3/ERK1, PLCG1, SRC and SHC1. This Callithrix jacchus (White-tufted-ear marmoset) protein is Mast/stem cell growth factor receptor Kit (KIT).